A 173-amino-acid polypeptide reads, in one-letter code: Co-chaperone protein HscB (173 aa).

Residues Asp-2–Leu-74 form the J domain.

This sequence belongs to the HscB family. In terms of assembly, interacts with HscA and stimulates its ATPase activity. Interacts with IscU.

Its function is as follows. Co-chaperone involved in the maturation of iron-sulfur cluster-containing proteins. Seems to help targeting proteins to be folded toward HscA. In Proteus mirabilis (strain HI4320), this protein is Co-chaperone protein HscB.